The sequence spans 464 residues: A-type ATP synthase subunit B (464 aa).

It belongs to the ATPase alpha/beta chains family. Has multiple subunits with at least A(3), B(3), C, D, E, F, H, I and proteolipid K(x).

Its subcellular location is the cell membrane. Functionally, component of the A-type ATP synthase that produces ATP from ADP in the presence of a proton gradient across the membrane. The B chain is a regulatory subunit. The chain is A-type ATP synthase subunit B from Methanococcus aeolicus (strain ATCC BAA-1280 / DSM 17508 / OCM 812 / Nankai-3).